A 72-amino-acid chain; its full sequence is Translation initiation factor IF-1 1 (72 aa).

Positions 1–72 constitute an S1-like domain; it reads MSKEDVIQMQ…TKGRIVFRAK (72 aa).

This sequence belongs to the IF-1 family. In terms of assembly, component of the 30S ribosomal translation pre-initiation complex which assembles on the 30S ribosome in the order IF-2 and IF-3, IF-1 and N-formylmethionyl-tRNA(fMet); mRNA recruitment can occur at any time during PIC assembly.

The protein resides in the cytoplasm. Its function is as follows. One of the essential components for the initiation of protein synthesis. Stabilizes the binding of IF-2 and IF-3 on the 30S subunit to which N-formylmethionyl-tRNA(fMet) subsequently binds. Helps modulate mRNA selection, yielding the 30S pre-initiation complex (PIC). Upon addition of the 50S ribosomal subunit IF-1, IF-2 and IF-3 are released leaving the mature 70S translation initiation complex. The protein is Translation initiation factor IF-1 1 of Thiobacillus denitrificans (strain ATCC 25259 / T1).